A 480-amino-acid polypeptide reads, in one-letter code: Adenosylhomocysteinase (480 aa).

Residues T63, D142, and E203 each coordinate substrate. NAD(+) is bound at residue 204–206 (TTT). The substrate site is built by K233 and D237. NAD(+) is bound by residues N238, 267–272 (GYGDVG), E290, N325, 346–348 (IGH), and N394.

It belongs to the adenosylhomocysteinase family. It depends on NAD(+) as a cofactor.

It localises to the cytoplasm. The enzyme catalyses S-adenosyl-L-homocysteine + H2O = L-homocysteine + adenosine. It participates in amino-acid biosynthesis; L-homocysteine biosynthesis; L-homocysteine from S-adenosyl-L-homocysteine: step 1/1. Functionally, may play a key role in the regulation of the intracellular concentration of adenosylhomocysteine. This is Adenosylhomocysteinase from Xylella fastidiosa (strain 9a5c).